Consider the following 175-residue polypeptide: RNA pyrophosphohydrolase (175 aa).

Residues Gly6–Lys150 form the Nudix hydrolase domain. The Nudix box motif lies at Gly38 to Gly59.

The protein belongs to the Nudix hydrolase family. RppH subfamily. Requires a divalent metal cation as cofactor.

Functionally, accelerates the degradation of transcripts by removing pyrophosphate from the 5'-end of triphosphorylated RNA, leading to a more labile monophosphorylated state that can stimulate subsequent ribonuclease cleavage. This is RNA pyrophosphohydrolase from Aeromonas hydrophila subsp. hydrophila (strain ATCC 7966 / DSM 30187 / BCRC 13018 / CCUG 14551 / JCM 1027 / KCTC 2358 / NCIMB 9240 / NCTC 8049).